The sequence spans 351 residues: V-type proton ATPase subunit d1 (351 aa).

It belongs to the V-ATPase V0D/AC39 subunit family. V-ATPase is a heteromultimeric enzyme composed of a peripheral catalytic V1 complex (components A to H) attached to an integral membrane V0 proton pore complex (components: a, c, c'', d and e).

It localises to the vacuole membrane. Subunit of the integral membrane V0 complex of vacuolar ATPase. Vacuolar ATPase is responsible for acidifying a variety of intracellular compartments in eukaryotic cells, thus providing most of the energy required for transport processes in the vacuolar system. This Arabidopsis thaliana (Mouse-ear cress) protein is V-type proton ATPase subunit d1 (VHA-d1).